Consider the following 171-residue polypeptide: MTKQHAFTREDLLRCSRGELFGPGNAQLPAPNMLMVDRITHISEEGGKYGKGELVAELDITPDLWFFACHFEGDPVMPGCLGLDAMWQLVGFFLGWQGLPGRGRALGSGEVKFFGQVLPSAKKVTYNIHIKRVLKGKLNMAIADGSVSVDGREIYTAEGLRVGVFTSTDNF.

Histidine 70 is an active-site residue.

This sequence belongs to the thioester dehydratase family. FabA subfamily. Homodimer.

Its subcellular location is the cytoplasm. The catalysed reaction is a (3R)-hydroxyacyl-[ACP] = a (2E)-enoyl-[ACP] + H2O. It catalyses the reaction (3R)-hydroxydecanoyl-[ACP] = (2E)-decenoyl-[ACP] + H2O. The enzyme catalyses (2E)-decenoyl-[ACP] = (3Z)-decenoyl-[ACP]. It functions in the pathway lipid metabolism; fatty acid biosynthesis. Necessary for the introduction of cis unsaturation into fatty acids. Catalyzes the dehydration of (3R)-3-hydroxydecanoyl-ACP to E-(2)-decenoyl-ACP and then its isomerization to Z-(3)-decenoyl-ACP. Can catalyze the dehydratase reaction for beta-hydroxyacyl-ACPs with saturated chain lengths up to 16:0, being most active on intermediate chain length. This is 3-hydroxydecanoyl-[acyl-carrier-protein] dehydratase from Pseudomonas putida (strain GB-1).